We begin with the raw amino-acid sequence, 136 residues long: Small ribosomal subunit protein uS9 (136 aa).

Belongs to the universal ribosomal protein uS9 family.

This chain is Small ribosomal subunit protein uS9, found in Borrelia hermsii (strain HS1 / DAH).